The following is a 286-amino-acid chain: MAGAKEIKTKIASVKNTQKITSAMEMVAASKMRRAQERMAASRPYAESMRKVIGHVAQGSLEYKHPYLEVREAKRVGYIVVATDRGLCGGLNVNLFKKVVADVKSWKEQGAEFEFCPIGARSVQFFKSFGGQVSAQASGLGDAPKLNDLIGTVQVMLEAYNEGKLDRLYVVFNKFVNTMTQTPVIEQLLPLPKSEDDEVAHRWDYIYEPDPKALLDTLLVRYVESQVYQGVVENIASEQAARMVAMKAATDNAGTLIDDLQLVYNKARQAAITQELSEIVSGASAV.

Belongs to the ATPase gamma chain family. F-type ATPases have 2 components, CF(1) - the catalytic core - and CF(0) - the membrane proton channel. CF(1) has five subunits: alpha(3), beta(3), gamma(1), delta(1), epsilon(1). CF(0) has three main subunits: a, b and c.

It is found in the cell inner membrane. In terms of biological role, produces ATP from ADP in the presence of a proton gradient across the membrane. The gamma chain is believed to be important in regulating ATPase activity and the flow of protons through the CF(0) complex. The chain is ATP synthase gamma chain from Shewanella oneidensis (strain ATCC 700550 / JCM 31522 / CIP 106686 / LMG 19005 / NCIMB 14063 / MR-1).